Reading from the N-terminus, the 513-residue chain is Coniferin beta-glucosidase (513 aa).

Residues 1-23 (MEVSVLMWVLLFYSLLGFQVTTA) form the signal peptide. A beta-D-glucoside contacts are provided by residues Q44, H145, and 190–191 (NE). E191 serves as the catalytic Proton donor. C210 and C219 are oxidised to a cystine. N223 is a glycosylation site (N-linked (GlcNAc...) asparagine). A beta-D-glucoside contacts are provided by Y336 and E408. E408 (nucleophile) is an active-site residue. N-linked (GlcNAc...) asparagine glycosylation is present at N447. Residues W457, 464 to 465 (EW), and F473 each bind a beta-D-glucoside.

It belongs to the glycosyl hydrolase 1 family. In terms of assembly, homodimer. In terms of processing, glycosylated.

The enzyme catalyses 4-O-(beta-D-glucosyl)-(E)-coniferol + H2O = (E)-coniferol + D-glucose. Inhibited by glucono-1,5-lactone, but not by bromoconduritol or conduritol B epoxide. Functionally, involved in the release of monolignols for lignin biosynthesis. Unable to hydrolyze 4-nitrophenyl beta-cellobioside or alpha-linked methylumbelliferyl glucoside. This is Coniferin beta-glucosidase from Pinus contorta (Shore pine).